A 466-amino-acid polypeptide reads, in one-letter code: 3-isopropylmalate dehydratase large subunit (466 aa).

[4Fe-4S] cluster-binding residues include C347, C407, and C410.

This sequence belongs to the aconitase/IPM isomerase family. LeuC type 1 subfamily. In terms of assembly, heterodimer of LeuC and LeuD. [4Fe-4S] cluster is required as a cofactor.

The enzyme catalyses (2R,3S)-3-isopropylmalate = (2S)-2-isopropylmalate. Its pathway is amino-acid biosynthesis; L-leucine biosynthesis; L-leucine from 3-methyl-2-oxobutanoate: step 2/4. Functionally, catalyzes the isomerization between 2-isopropylmalate and 3-isopropylmalate, via the formation of 2-isopropylmaleate. The chain is 3-isopropylmalate dehydratase large subunit from Shewanella woodyi (strain ATCC 51908 / MS32).